Reading from the N-terminus, the 156-residue chain is Large ribosomal subunit protein uL15 (156 aa).

A disordered region spans residues 29 to 48 (CGKGKTSGRGHKGQKARSGV). Residues 34 to 43 (TSGRGHKGQK) are compositionally biased toward basic residues.

The protein belongs to the universal ribosomal protein uL15 family. As to quaternary structure, part of the 50S ribosomal subunit.

Binds to the 23S rRNA. The sequence is that of Large ribosomal subunit protein uL15 from Ehrlichia chaffeensis (strain ATCC CRL-10679 / Arkansas).